The primary structure comprises 207 residues: MADS-box protein AGL71 (207 aa).

The MADS-box domain occupies 1–61; the sequence is MVRGKIEIKK…GRLHEYSSSQ (61 aa). A K-box domain is found at 88–178; sequence LQELKMEIDR…LEEVNMHHSS (91 aa).

The protein localises to the nucleus. In terms of biological role, MADS-box transcription factor that acts with AGL42 and AGL72 in the control of flowering time. Promotes flowering at the shoot apical and axillary meristems. Seems to act through a gibberellin-dependent pathway. Interacts genetically with SOC1 and its expression is directly regulated by SOC1. The polypeptide is MADS-box protein AGL71 (AGL71) (Arabidopsis thaliana (Mouse-ear cress)).